The primary structure comprises 477 residues: Proton extrusion protein PxcA (477 aa).

Helical transmembrane passes span 239-259, 354-374, and 437-457; these read FILLVILVPLLIHQLSKITFV, GIKNIFCDFISLITFVIIIST, and FNFLFIATFPVILDAVFKYWI.

This sequence belongs to the CemA family.

It localises to the cell inner membrane. Functionally, required for H(+) efflux immediately after light irradiation to form a rapid H(+) concentration gradient across the thylakoid membranes. Together with PxcL, contributes to transient H(+) uptake following dark to light transition. This Trichodesmium erythraeum (strain IMS101) protein is Proton extrusion protein PxcA.